The primary structure comprises 398 residues: MASAVQKSALLLCGDYMEAYETIVPLYVLQSFGVSVHCVSPNRNAGDRCVMSAHDFLGLELYTELVVDQLTLNANFDDVTPENYDVIIIPGGRFTELLSADEKCVDLVARFAESKKLIFTSCHSQVMLMAAGILAGGVKCTAFESIKPLIELSGGEWWQQPGIQSMFEITDCVKDGNFMSTVGWPTLGHGIKLLLESLGGKVCSLEKKQASVLFLIGDYVEDYGINVPFRALQALGCKVDAVTPNKKKGEVCATAVYDLEDGRQIPAEKRGHNFFVTASWDDICVDDYDCVVVPGGRSPELLVMNEKAVALVKSFAEKDKVFAAIGQGKLLLAATGVLKGKRCASGKGMKVMVKVAGGEAVMEKGCVTDGKVVTAASATDLPAFLFDLSTALGLTVMF.

2 PfpI endopeptidase domains span residues 7-199 (KSAL…ESLG) and 210-393 (ASVL…TALG).

Belongs to the peptidase C56 family. In terms of assembly, homotrimer. As to expression, expressed in roots and cauline leaves.

Its function is as follows. May be involved in oxidative stress response. This chain is DJ-1 protein homolog E (DJ1E), found in Arabidopsis thaliana (Mouse-ear cress).